Reading from the N-terminus, the 104-residue chain is Inclusion membrane protein F (104 aa).

The next 2 membrane-spanning stretches (helical) occupy residues 39 to 59 (LVVA…SLVA) and 70 to 90 (LAVL…VLFI).

It localises to the secreted. The protein localises to the host vacuole. The protein resides in the host pathogen-containing vacuole. It is found in the host pathogen-containing vacuole membrane. Functionally, inclusion membrane protein probably involved in early modification events of the chlamydial inclusion. The polypeptide is Inclusion membrane protein F (Chlamydia trachomatis serovar L2 (strain ATCC VR-902B / DSM 19102 / 434/Bu)).